The primary structure comprises 284 residues: NH(3)-dependent NAD(+) synthetase (284 aa).

An ATP-binding site is contributed by 51 to 58; that stretch reads GISGGIDS. D57 is a Mg(2+) binding site. R148 is a deamido-NAD(+) binding site. T168 contributes to the ATP binding site. E173 is a binding site for Mg(2+). The deamido-NAD(+) site is built by K181 and D188. K197 and T219 together coordinate ATP. 268–269 lines the deamido-NAD(+) pocket; the sequence is HK.

Belongs to the NAD synthetase family. Homodimer.

It catalyses the reaction deamido-NAD(+) + NH4(+) + ATP = AMP + diphosphate + NAD(+) + H(+). Its pathway is cofactor biosynthesis; NAD(+) biosynthesis; NAD(+) from deamido-NAD(+) (ammonia route): step 1/1. Its function is as follows. Catalyzes the ATP-dependent amidation of deamido-NAD to form NAD. Uses ammonia as a nitrogen source. The sequence is that of NH(3)-dependent NAD(+) synthetase from Burkholderia pseudomallei (strain 1106a).